Reading from the N-terminus, the 676-residue chain is Lon-like protease BrxL (676 aa).

Belongs to the BrxL family.

Its function is as follows. BREX systems (bacteriophage exclusion) provide immunity against bacteriophage. Part of a type 1 BREX system. This system allows phage adsorption but prevents phage DNA replication, without degradation of the phage DNA. Methylation of bacterial DNA by PglX probably guides self/non-self discrimination. When the brxA-brxB-brxC-pglX and pglZ-brxL operons are transformed into a susceptible B.subtilis strain (BEST7003) they confer resistance to bacteriophages SPbeta, SP16, Zeta, phi3T and SP02 and partial protection to phages SP01 and SP82G (these include lytic and temperate phage). They do not protect against phages phi105, rho10 or rho14. Additionally confers a very slight reduction in efficiency of plasmid transformation. The sequence is that of Lon-like protease BrxL from Bacillus cereus (strain H3081.97).